An 84-amino-acid chain; its full sequence is Keratin-associated protein 19-4 (84 aa).

This sequence belongs to the KRTAP type 19 family. Interacts with hair keratins.

Functionally, in the hair cortex, hair keratin intermediate filaments are embedded in an interfilamentous matrix, consisting of hair keratin-associated proteins (KRTAP), which are essential for the formation of a rigid and resistant hair shaft through their extensive disulfide bond cross-linking with abundant cysteine residues of hair keratins. The matrix proteins include the high-sulfur and high-glycine-tyrosine keratins. This is Keratin-associated protein 19-4 (KRTAP19-4) from Homo sapiens (Human).